The primary structure comprises 227 residues: Protein M1425_1941 (227 aa).

Positions 15–209 constitute an AMMECR1 domain; sequence EIGRFLIEIA…ETRPDGSDII (195 aa).

In Saccharolobus islandicus (strain M.14.25 / Kamchatka #1) (Sulfolobus islandicus), this protein is Protein M1425_1941.